The following is a 95-amino-acid chain: Exodeoxyribonuclease 7 small subunit (95 aa).

Positions E65–S95 are disordered.

The protein belongs to the XseB family. In terms of assembly, heterooligomer composed of large and small subunits.

The protein resides in the cytoplasm. It catalyses the reaction Exonucleolytic cleavage in either 5'- to 3'- or 3'- to 5'-direction to yield nucleoside 5'-phosphates.. Bidirectionally degrades single-stranded DNA into large acid-insoluble oligonucleotides, which are then degraded further into small acid-soluble oligonucleotides. In Chlorobaculum tepidum (strain ATCC 49652 / DSM 12025 / NBRC 103806 / TLS) (Chlorobium tepidum), this protein is Exodeoxyribonuclease 7 small subunit.